We begin with the raw amino-acid sequence, 60 residues long: Large ribosomal subunit protein bL33 (60 aa).

Belongs to the bacterial ribosomal protein bL33 family.

The protein is Large ribosomal subunit protein bL33 of Pelodictyon phaeoclathratiforme (strain DSM 5477 / BU-1).